A 693-amino-acid chain; its full sequence is MA3 DOMAIN-CONTAINING TRANSLATION REGULATORY FACTOR 2 (693 aa).

Positions 25-60 (SLDPLPQANMAEDLTKSRRHSPIKVEGSEETWGVED) are disordered. Positions 90–211 (EYKKKATVIV…PPAFLKKQMK (122 aa)) constitute an MI 1 domain. The Nuclear localization signal 1 motif lies at 241–248 (EKRWGGTD). 3 consecutive MI domains span residues 254-375 (DVKA…SLSA), 389-510 (VFKD…EVLN), and 560-681 (EVKE…EDSQ). The Nuclear localization signal 2 motif lies at 430–437 (VKYLITLA). The disordered stretch occupies residues 673 to 693 (ESFASEDSQSKKQNGSSSSSG). Residues 683–693 (KKQNGSSSSSG) are compositionally biased toward low complexity.

This sequence belongs to the PDCD4 family. In terms of assembly, binds to EIF4A1. The association with ribosomes is modulated by cellular energy status and TOR activity. In terms of tissue distribution, mostly expressed in reproductive tissues, such as flower buds and flowers, and, to a lower extent, in vegetative tissues, such as leaves, roots and stems.

The protein resides in the nucleus. It is found in the cytoplasm. Its subcellular location is the cytosol. Functionally, involved in target of rapamycin (TOR)-regulated translation control, especially under energy-deficient conditions. This is MA3 DOMAIN-CONTAINING TRANSLATION REGULATORY FACTOR 2 from Arabidopsis thaliana (Mouse-ear cress).